Consider the following 1178-residue polypeptide: DNA-directed RNA polymerase subunit beta' (1178 aa).

Zn(2+) is bound by residues Cys60, Cys62, Cys75, and Cys78. Residues Asp450, Asp452, and Asp454 each coordinate Mg(2+). The Zn(2+) site is built by Cys795, Cys869, Cys876, and Cys879.

The protein belongs to the RNA polymerase beta' chain family. In terms of assembly, the RNAP catalytic core consists of 2 alpha, 1 beta, 1 beta' and 1 omega subunit. When a sigma factor is associated with the core the holoenzyme is formed, which can initiate transcription. Mg(2+) serves as cofactor. It depends on Zn(2+) as a cofactor.

It catalyses the reaction RNA(n) + a ribonucleoside 5'-triphosphate = RNA(n+1) + diphosphate. In terms of biological role, DNA-dependent RNA polymerase catalyzes the transcription of DNA into RNA using the four ribonucleoside triphosphates as substrates. This Clostridium beijerinckii (strain ATCC 51743 / NCIMB 8052) (Clostridium acetobutylicum) protein is DNA-directed RNA polymerase subunit beta'.